The following is a 234-amino-acid chain: Proteasome subunit alpha (234 aa).

Belongs to the peptidase T1A family. As to quaternary structure, the 20S proteasome core is composed of 14 alpha and 14 beta subunits that assemble into four stacked heptameric rings, resulting in a barrel-shaped structure. The two inner rings, each composed of seven catalytic beta subunits, are sandwiched by two outer rings, each composed of seven alpha subunits. The catalytic chamber with the active sites is on the inside of the barrel. Has a gated structure, the ends of the cylinder being occluded by the N-termini of the alpha-subunits. Is capped by the proteasome-associated ATPase, ARC.

It is found in the cytoplasm. It functions in the pathway protein degradation; proteasomal Pup-dependent pathway. The formation of the proteasomal ATPase ARC-20S proteasome complex, likely via the docking of the C-termini of ARC into the intersubunit pockets in the alpha-rings, may trigger opening of the gate for substrate entry. Interconversion between the open-gate and close-gate conformations leads to a dynamic regulation of the 20S proteasome proteolysis activity. In terms of biological role, component of the proteasome core, a large protease complex with broad specificity involved in protein degradation. The chain is Proteasome subunit alpha from Acidothermus cellulolyticus (strain ATCC 43068 / DSM 8971 / 11B).